We begin with the raw amino-acid sequence, 319 residues long: tRNA N6-adenosine threonylcarbamoyltransferase (319 aa).

Fe cation contacts are provided by histidine 110 and histidine 114. Residues 132–136 (VVSGG), aspartate 165, glycine 178, aspartate 182, and asparagine 271 each bind substrate. Residue aspartate 300 coordinates Fe cation.

The protein belongs to the KAE1 / TsaD family. It depends on Fe(2+) as a cofactor.

It localises to the cytoplasm. The enzyme catalyses L-threonylcarbamoyladenylate + adenosine(37) in tRNA = N(6)-L-threonylcarbamoyladenosine(37) in tRNA + AMP + H(+). In terms of biological role, required for the formation of a threonylcarbamoyl group on adenosine at position 37 (t(6)A37) in tRNAs that read codons beginning with adenine. Is involved in the transfer of the threonylcarbamoyl moiety of threonylcarbamoyl-AMP (TC-AMP) to the N6 group of A37, together with TsaE and TsaB. TsaD likely plays a direct catalytic role in this reaction. In Mycoplasma capricolum subsp. capricolum (strain California kid / ATCC 27343 / NCTC 10154), this protein is tRNA N6-adenosine threonylcarbamoyltransferase.